The sequence spans 785 residues: Mitochondrial intermediate peptidase (785 aa).

A mitochondrion-targeting transit peptide spans 1 to 27; the sequence is MLKAVMPRPWVCSRCVKRQIQSSRGLA. The disordered stretch occupies residues 26–52; it reads LATASTQYREPRPVPTDHSAPGAKHDD. Residue histidine 566 participates in Zn(2+) binding. Glutamate 567 is a catalytic residue. Zn(2+) is bound by residues histidine 570 and histidine 573.

The protein belongs to the peptidase M3 family. Zn(2+) serves as cofactor.

It is found in the mitochondrion matrix. It catalyses the reaction Release of an N-terminal octapeptide as second stage of processing of some proteins imported into the mitochondrion.. In terms of biological role, cleaves proteins, imported into the mitochondrion, to their mature size. While most mitochondrial precursor proteins are processed to the mature form in one step by mitochondrial processing peptidase (MPP), the sequential cleavage by MIP of an octapeptide after initial processing by MPP is a required step for a subgroup of nuclear-encoded precursor proteins destined for the matrix or the inner membrane. This is Mitochondrial intermediate peptidase (oct1) from Sclerotinia sclerotiorum (strain ATCC 18683 / 1980 / Ss-1) (White mold).